Here is a 346-residue protein sequence, read N- to C-terminus: N-acetyl-gamma-glutamyl-phosphate reductase (346 aa).

The active site involves Cys-150.

This sequence belongs to the NAGSA dehydrogenase family. Type 1 subfamily.

It localises to the cytoplasm. It carries out the reaction N-acetyl-L-glutamate 5-semialdehyde + phosphate + NADP(+) = N-acetyl-L-glutamyl 5-phosphate + NADPH + H(+). The protein operates within amino-acid biosynthesis; L-arginine biosynthesis; N(2)-acetyl-L-ornithine from L-glutamate: step 3/4. Its function is as follows. Catalyzes the NADPH-dependent reduction of N-acetyl-5-glutamyl phosphate to yield N-acetyl-L-glutamate 5-semialdehyde. This chain is N-acetyl-gamma-glutamyl-phosphate reductase, found in Brevibacillus brevis (strain 47 / JCM 6285 / NBRC 100599).